Reading from the N-terminus, the 480-residue chain is Glycogen synthase 1 (480 aa).

Position 15 (Lys-15) interacts with ADP-alpha-D-glucose.

It belongs to the glycosyltransferase 1 family. Bacterial/plant glycogen synthase subfamily.

The enzyme catalyses [(1-&gt;4)-alpha-D-glucosyl](n) + ADP-alpha-D-glucose = [(1-&gt;4)-alpha-D-glucosyl](n+1) + ADP + H(+). It participates in glycan biosynthesis; glycogen biosynthesis. Its function is as follows. Synthesizes alpha-1,4-glucan chains using ADP-glucose. The protein is Glycogen synthase 1 (glgA1) of Rhizobium radiobacter (Agrobacterium tumefaciens).